The following is a 158-amino-acid chain: 2-C-methyl-D-erythritol 2,4-cyclodiphosphate synthase (158 aa).

A divalent metal cation contacts are provided by aspartate 9 and histidine 11. 4-CDP-2-C-methyl-D-erythritol 2-phosphate-binding positions include aspartate 9–histidine 11 and histidine 35–serine 36. Histidine 43 contacts a divalent metal cation. 4-CDP-2-C-methyl-D-erythritol 2-phosphate contacts are provided by residues aspartate 57–glycine 59, phenylalanine 62–aspartate 66, threonine 133–glutamate 136, phenylalanine 140, and arginine 143.

This sequence belongs to the IspF family. In terms of assembly, homotrimer. A divalent metal cation is required as a cofactor.

The catalysed reaction is 4-CDP-2-C-methyl-D-erythritol 2-phosphate = 2-C-methyl-D-erythritol 2,4-cyclic diphosphate + CMP. It participates in isoprenoid biosynthesis; isopentenyl diphosphate biosynthesis via DXP pathway; isopentenyl diphosphate from 1-deoxy-D-xylulose 5-phosphate: step 4/6. Involved in the biosynthesis of isopentenyl diphosphate (IPP) and dimethylallyl diphosphate (DMAPP), two major building blocks of isoprenoid compounds. Catalyzes the conversion of 4-diphosphocytidyl-2-C-methyl-D-erythritol 2-phosphate (CDP-ME2P) to 2-C-methyl-D-erythritol 2,4-cyclodiphosphate (ME-CPP) with a corresponding release of cytidine 5-monophosphate (CMP). This chain is 2-C-methyl-D-erythritol 2,4-cyclodiphosphate synthase, found in Haemophilus influenzae (strain PittGG).